The following is a 239-amino-acid chain: Bradykinin-potentiating and C-type natriuretic peptides (239 aa).

Residues 1-23 (MFVSRLAASGLLLLALLAVSLDG) form the signal peptide. Propeptides lie at residues 24-33 (KPVQQWSHKG) and 43-49 (LVVQQWS). Q50 bears the Pyrrolidone carboxylic acid mark. The propeptide occupies 62–64 (VVV). At Q65 the chain carries Pyrrolidone carboxylic acid. A propeptide spanning residues 76–82 (LVVQQWS) is cleaved from the precursor. At Q83 the chain carries Pyrrolidone carboxylic acid. Residues 95–97 (LVV) constitute a propeptide that is removed on maturation. Q98 bears the Pyrrolidone carboxylic acid mark. Propeptides lie at residues 109–136 (LLKP…AALD) and 148–217 (GSKA…LAKK). A disordered region spans residues 132–205 (EAALDTPPAG…HHAVGGGGGG (74 aa)). Positions 161-171 (SKGASATSAAS) are enriched in low complexity. Over residues 173-183 (PMRDLRTDGKQ) the composition is skewed to basic and acidic residues. An intrachain disulfide couples C223 to C239.

In the N-terminal section; belongs to the bradykinin-potentiating peptide family. The protein in the central section; belongs to the bradykinin inhibitor peptide family. This sequence in the C-terminal section; belongs to the natriuretic peptide family. Expressed by the venom gland.

Its subcellular location is the secreted. Functionally, bradykinin-potentiating peptides both inhibit the activity of the angiotensin-converting enzyme (ACE) and enhances the action of bradykinin by inhibiting the peptidases that inactivate it. They act as indirect hypotensive agent. In terms of biological role, inhibits angiotensin-converting enzyme (ACE) activity (IC(50)=4.25 uM), preventing the release of angiotensin and thus indirectly contributing to hypotension. In vivo, induce hypotensive response in both normotensive and hypertensive rats. Its function is as follows. antagonizes the vasodilatory actions of bradykinin at the B2 bradykinin receptor (BDKRB2). Has a vasorelaxant activity in rat aortic strips and a diuretic potency in anesthetized rats. May act by activating natriuretic receptors (NPR1 and/or NPR2). This Lachesis muta muta (Bushmaster) protein is Bradykinin-potentiating and C-type natriuretic peptides.